A 175-amino-acid polypeptide reads, in one-letter code: Large ribosomal subunit protein uL10 (175 aa).

Belongs to the universal ribosomal protein uL10 family. As to quaternary structure, part of the ribosomal stalk of the 50S ribosomal subunit. The N-terminus interacts with L11 and the large rRNA to form the base of the stalk. The C-terminus forms an elongated spine to which L12 dimers bind in a sequential fashion forming a multimeric L10(L12)X complex.

Its function is as follows. Forms part of the ribosomal stalk, playing a central role in the interaction of the ribosome with GTP-bound translation factors. This is Large ribosomal subunit protein uL10 from Cyanothece sp. (strain PCC 7425 / ATCC 29141).